We begin with the raw amino-acid sequence, 327 residues long: Methionyl-tRNA formyltransferase (327 aa).

A (6S)-5,6,7,8-tetrahydrofolate-binding site is contributed by 113-116 (SILP).

Belongs to the Fmt family.

The catalysed reaction is L-methionyl-tRNA(fMet) + (6R)-10-formyltetrahydrofolate = N-formyl-L-methionyl-tRNA(fMet) + (6S)-5,6,7,8-tetrahydrofolate + H(+). Its function is as follows. Attaches a formyl group to the free amino group of methionyl-tRNA(fMet). The formyl group appears to play a dual role in the initiator identity of N-formylmethionyl-tRNA by promoting its recognition by IF2 and preventing the misappropriation of this tRNA by the elongation apparatus. The polypeptide is Methionyl-tRNA formyltransferase (Colwellia psychrerythraea (strain 34H / ATCC BAA-681) (Vibrio psychroerythus)).